Here is a 376-residue protein sequence, read N- to C-terminus: tRNA-specific 2-thiouridylase MnmA (376 aa).

ATP-binding positions include 9–16 and methionine 35; that span reads AMSGGIDS. Cysteine 105 (nucleophile) is an active-site residue. Cysteine 105 and cysteine 202 form a disulfide bridge. An ATP-binding site is contributed by glycine 129. Residues 151–153 are interaction with tRNA; that stretch reads KDQ. The Cysteine persulfide intermediate role is filled by cysteine 202. The interval 312-313 is interaction with tRNA; sequence RY.

The protein belongs to the MnmA/TRMU family.

The protein resides in the cytoplasm. The catalysed reaction is S-sulfanyl-L-cysteinyl-[protein] + uridine(34) in tRNA + AH2 + ATP = 2-thiouridine(34) in tRNA + L-cysteinyl-[protein] + A + AMP + diphosphate + H(+). In terms of biological role, catalyzes the 2-thiolation of uridine at the wobble position (U34) of tRNA, leading to the formation of s(2)U34. This is tRNA-specific 2-thiouridylase MnmA from Amoebophilus asiaticus (strain 5a2).